The sequence spans 645 residues: 1,4-alpha-glucan branching enzyme GlgB (645 aa).

Aspartate 309 functions as the Nucleophile in the catalytic mechanism. Catalysis depends on glutamate 352, which acts as the Proton donor. A disordered region spans residues 619–645; sequence VKTRKGSKKQDGSKTKVRSNVTSRGKR. Over residues 636–645 the composition is skewed to polar residues; that stretch reads RSNVTSRGKR.

The protein belongs to the glycosyl hydrolase 13 family. GlgB subfamily. Monomer.

It catalyses the reaction Transfers a segment of a (1-&gt;4)-alpha-D-glucan chain to a primary hydroxy group in a similar glucan chain.. Its pathway is glycan biosynthesis; glycogen biosynthesis. In terms of biological role, catalyzes the formation of the alpha-1,6-glucosidic linkages in glycogen by scission of a 1,4-alpha-linked oligosaccharide from growing alpha-1,4-glucan chains and the subsequent attachment of the oligosaccharide to the alpha-1,6 position. The chain is 1,4-alpha-glucan branching enzyme GlgB from Bacillus cereus (strain AH820).